A 448-amino-acid polypeptide reads, in one-letter code: Fumarate hydratase class II (448 aa).

Substrate-binding positions include 83-85 (SGT), 113-116 (HPND), 123-125 (SSN), and Thr171. Catalysis depends on His172, which acts as the Proton donor/acceptor. Ser302 is a catalytic residue. Residues Ser303 and 308 to 310 (KVN) each bind substrate.

It belongs to the class-II fumarase/aspartase family. Fumarase subfamily. As to quaternary structure, homotetramer.

The protein resides in the cytoplasm. It catalyses the reaction (S)-malate = fumarate + H2O. The protein operates within carbohydrate metabolism; tricarboxylic acid cycle; (S)-malate from fumarate: step 1/1. In terms of biological role, involved in the TCA cycle. Catalyzes the stereospecific interconversion of fumarate to L-malate. The chain is Fumarate hydratase class II from Blochmanniella floridana.